Consider the following 173-residue polypeptide: Nascent polypeptide-associated complex subunit alpha (173 aa).

The NAC-A/B domain occupies 21–85; it reads VVHAEKAQKL…VTVEDMAAQA (65 aa). Residues 89-117 are disordered; the sequence is NESQKQATETKEEAAITEESGDAQPADTA. Serine 122 is modified (phosphoserine). The UBA domain occupies 134–171; that stretch reads VDAKDIELVMAQANVSRAKAVTALKENNSDVVNAIMSL.

This sequence belongs to the NAC-alpha family. In terms of assembly, part of the nascent polypeptide-associated complex (NAC), consisting of ucp15 and btf3. NAC associates with ribosomes via btf3.

It is found in the cytoplasm. The protein resides in the nucleus. Its function is as follows. Component of the nascent polypeptide-associated complex (NAC), a dynamic component of the ribosomal exit tunnel, protecting the emerging polypeptides from interaction with other cytoplasmic proteins to ensure appropriate nascent protein targeting. The NAC complex also promotes mitochondrial protein import by enhancing productive ribosome interactions with the outer mitochondrial membrane and blocks the inappropriate interaction of ribosomes translating non-secretory nascent polypeptides with translocation sites in the membrane of the endoplasmic reticulum. Ucp15 may also be involved in transcription regulation. The sequence is that of Nascent polypeptide-associated complex subunit alpha (egd2) from Schizosaccharomyces pombe (strain 972 / ATCC 24843) (Fission yeast).